The chain runs to 102 residues: Large ribosomal subunit protein bL21 (102 aa).

The segment covering 79-91 (RKDSKRKKGHRQP) has biased composition (basic residues). The segment at 79 to 102 (RKDSKRKKGHRQPYTKLTIDKINA) is disordered.

The protein belongs to the bacterial ribosomal protein bL21 family. In terms of assembly, part of the 50S ribosomal subunit. Contacts protein L20.

In terms of biological role, this protein binds to 23S rRNA in the presence of protein L20. This Staphylococcus carnosus (strain TM300) protein is Large ribosomal subunit protein bL21.